The following is a 1414-amino-acid chain: DNA-directed RNA polymerase subunit beta' (1414 aa).

Zn(2+)-binding residues include cysteine 70, cysteine 72, cysteine 85, and cysteine 88. Mg(2+)-binding residues include aspartate 460, aspartate 462, and aspartate 464. Cysteine 819, cysteine 893, cysteine 900, and cysteine 903 together coordinate Zn(2+). Residues 1391 to 1414 form a disordered region; that stretch reads AEEAFDFGTPSAPAEEPQQHPAAE. Over residues 1400 to 1414 the composition is skewed to low complexity; the sequence is PSAPAEEPQQHPAAE.

This sequence belongs to the RNA polymerase beta' chain family. The RNAP catalytic core consists of 2 alpha, 1 beta, 1 beta' and 1 omega subunit. When a sigma factor is associated with the core the holoenzyme is formed, which can initiate transcription. Mg(2+) is required as a cofactor. The cofactor is Zn(2+).

The catalysed reaction is RNA(n) + a ribonucleoside 5'-triphosphate = RNA(n+1) + diphosphate. DNA-dependent RNA polymerase catalyzes the transcription of DNA into RNA using the four ribonucleoside triphosphates as substrates. In Burkholderia lata (strain ATCC 17760 / DSM 23089 / LMG 22485 / NCIMB 9086 / R18194 / 383), this protein is DNA-directed RNA polymerase subunit beta'.